Consider the following 467-residue polypeptide: ATP synthase subunit beta (467 aa).

An ATP-binding site is contributed by 150 to 157 (GGAGVGKT).

The protein belongs to the ATPase alpha/beta chains family. In terms of assembly, F-type ATPases have 2 components, CF(1) - the catalytic core - and CF(0) - the membrane proton channel. CF(1) has five subunits: alpha(3), beta(3), gamma(1), delta(1), epsilon(1). CF(0) has three main subunits: a(1), b(2) and c(9-12). The alpha and beta chains form an alternating ring which encloses part of the gamma chain. CF(1) is attached to CF(0) by a central stalk formed by the gamma and epsilon chains, while a peripheral stalk is formed by the delta and b chains.

The protein resides in the cell inner membrane. The catalysed reaction is ATP + H2O + 4 H(+)(in) = ADP + phosphate + 5 H(+)(out). Functionally, produces ATP from ADP in the presence of a proton gradient across the membrane. The catalytic sites are hosted primarily by the beta subunits. This Aliivibrio fischeri (strain MJ11) (Vibrio fischeri) protein is ATP synthase subunit beta.